The sequence spans 457 residues: Dolichol phosphate-mannose mannosyltransferase (457 aa).

Residues 1 to 12 (MKRLAKAAFSQN) are Cytoplasmic-facing. Residues 13–33 (SLTAPIVSTFVYLISVVRVVL) traverse the membrane as a helical segment. At 34-91 (NGNWPVTSSDTAMFQHIGWMVFSGKRYYIDAWDPKPPLTLELATIIAYISNGDPHLQH) the chain is on the extracellular side. A helical transmembrane segment spans residues 92–112 (TLSVVSTIVAGILLTYLISHI). At 113 to 120 (TSEITGNQ) the chain is on the cytoplasmic side. Residues 121–141 (FAGLLSGIVFITFPVIHYSAV) form a helical membrane-spanning segment. Residues 142-173 (FGYEPKYFVFLFGLGSIYLSRNPKPILSGAAA) lie on the Extracellular side of the membrane. A helical transmembrane segment spans residues 174–194 (AASAGMWQFAIIFPIISFGII). The Cytoplasmic segment spans residues 195-211 (SRRKSKDLILKYVFGAT). The helical transmembrane segment at 212–232 (IIAFISLLPIYLQGGLVAMTV) threads the bilayer. The Extracellular segment spans residues 233 to 259 (EVIIAPLYAGETQSFLYRLVKGVTHLK). Residues 260–280 (LMIPIALLGMAGILLGFLDDI) form a helical membrane-spanning segment. Residues 281–283 (RER) lie on the Cytoplasmic side of the membrane. Residues 284–304 (WWVVGLLLWFCIQIFILDYDG) traverse the membrane as a helical segment. Residues 305 to 307 (ADD) lie on the Extracellular side of the membrane. A helical transmembrane segment spans residues 308 to 328 (LFLGIILVSMGIGFAFEKLST). The Cytoplasmic portion of the chain corresponds to 329 to 337 (KYESERINS). The chain crosses the membrane as a helical span at residues 338 to 358 (IVTAVVVCMLIWQVVTLGGVG). The Extracellular segment spans residues 359–457 (VITNPYSYSG…EEKCGKWRLP (99 aa)).

It is found in the cell membrane. It participates in cell surface structure biogenesis; S-layer biogenesis. The protein operates within protein modification; protein glycosylation. Its function is as follows. Involved in the assembly of a N-linked pentasaccharide that decorates the S-layer glycoprotein and flagellins. Transfers mannose, the terminal pentasaccharide residue, from its dedicated dolichol phosphate carrier to the protein-bound glycan comprising the first four subunits of the N-linked pentasaccharide. This chain is Dolichol phosphate-mannose mannosyltransferase (aglS), found in Haloferax volcanii (strain ATCC 29605 / DSM 3757 / JCM 8879 / NBRC 14742 / NCIMB 2012 / VKM B-1768 / DS2) (Halobacterium volcanii).